The following is a 1026-amino-acid chain: Contactin-4 (1026 aa).

The N-terminal stretch at 1–18 (MRLPWELLVLQSFMLCLA) is a signal peptide. Ig-like C2-type domains lie at 32-117 (PSHV…AKLQ), 122-206 (ENFK…HQVL), 225-311 (PKIE…GQVT), 316-400 (PNWV…AELS), 406-493 (PDFS…GNVV), and 497-586 (PTKV…DKLS). Intrachain disulfides connect Cys50/Cys100, Cys144/Cys194, Cys247/Cys295, Cys337/Cys384, Cys429/Cys477, and Cys519/Cys576. Residues Asn65, Asn90, and Asn191 are each glycosylated (N-linked (GlcNAc...) asparagine). Residues Asn370, Asn375, and Asn466 are each glycosylated (N-linked (GlcNAc...) asparagine). Fibronectin type-III domains lie at 599 to 697 (PPEA…TEEA), 702 to 799 (TPAN…SAEE), 804 to 899 (PPAS…TRKP), and 900 to 995 (PPSQ…ISNS). A disordered region spans residues 685 to 710 (PSRPSEKRRTEEALPEVTPANVSGGG). Positions 687 to 696 (RPSEKRRTEE) are enriched in basic and acidic residues. N-linked (GlcNAc...) asparagine glycans are attached at residues Asn705, Asn764, Asn858, Asn893, Asn911, Asn929, and Asn954. A lipid anchor (GPI-anchor amidated serine) is attached at Ser1000. Residues 1001–1026 (GASTSNACTLSAISTIMISLTARSSL) constitute a propeptide, removed in mature form.

It belongs to the immunoglobulin superfamily. Contactin family. Interacts with PTPRG. Specifically expressed in the nervous system. Not expressed in heart, spleen, lung, liver, kidney or skeletal muscle. In the hippocampus, it is highly expressed in CA1 pyramidal cells and weakly expressed in other regions of the hippocampus.

It is found in the cell membrane. The protein resides in the secreted. Its function is as follows. Contactins mediate cell surface interactions during nervous system development. Has some neurite outgrowth-promoting activity. May be involved in synaptogenesis. The polypeptide is Contactin-4 (Cntn4) (Rattus norvegicus (Rat)).